We begin with the raw amino-acid sequence, 488 residues long: UDP-N-acetylmuramate--L-alanine ligase (488 aa).

An ATP-binding site is contributed by 127–133 (GTHGKTT).

Belongs to the MurCDEF family.

It localises to the cytoplasm. The enzyme catalyses UDP-N-acetyl-alpha-D-muramate + L-alanine + ATP = UDP-N-acetyl-alpha-D-muramoyl-L-alanine + ADP + phosphate + H(+). It functions in the pathway cell wall biogenesis; peptidoglycan biosynthesis. Its function is as follows. Cell wall formation. The polypeptide is UDP-N-acetylmuramate--L-alanine ligase (Shewanella baltica (strain OS223)).